The following is a 120-amino-acid chain: MVSSKDIIQRRARRVRRRIKMVSHDRPRLSVYRSNQNIYAQVIDDLRGCTLVSASTLESDLKKSLKSGADKEAAFAVGKLIAERAKKAGVNEVVFDRGAYVYHGRVKALAEAAREGGLSF.

It belongs to the universal ribosomal protein uL18 family. In terms of assembly, part of the 50S ribosomal subunit; part of the 5S rRNA/L5/L18/L25 subcomplex. Contacts the 5S and 23S rRNAs.

In terms of biological role, this is one of the proteins that bind and probably mediate the attachment of the 5S RNA into the large ribosomal subunit, where it forms part of the central protuberance. The chain is Large ribosomal subunit protein uL18 from Bartonella tribocorum (strain CIP 105476 / IBS 506).